We begin with the raw amino-acid sequence, 82 residues long: Large ribosomal subunit protein bL27 (82 aa).

A disordered region spans residues 1–21 (MAHKKGASSSRNGRDSNAKRL).

This sequence belongs to the bacterial ribosomal protein bL27 family.

The polypeptide is Large ribosomal subunit protein bL27 (Tropheryma whipplei (strain Twist) (Whipple's bacillus)).